The primary structure comprises 410 residues: MSRDPKLSLSKFLECLNEIEHEFLRDKVEHRPVLVRKLQELQQKTPKHVTNLPNDPETIQQIHQIAHRLEVAVKVFLHIDRKFVSLRSDVVEDTSKALQEVNVASPAVEYRNLSEDLPAYHMRKHFLHTLDSPYPTQEEKETLVRLTNESTARVGQSSVNRPPLEVHQLTLWFINARRRSGWSHILKKFAREDRSRMKHLVRAKLSSSNQSTPPSLTSEKPSDDLDVVLSDNLGRPLTLADKQQFEDDWASMISWIKYGVKEKVGDWVYDLCAASKKTPKPGMPRPVTTVAKRQPARKTKPAAKPKSRTANPRASTTPSIDSTLDSSKLESTPELSMCSTADTSFSTFGSSLSMSHYDPFQYGNDILQSPTFKARGNRKVKALPKRAGKQQPDEIDNGKIPFFCLSIAFV.

The tract at residues M1–Y110 is variable domain between B alleles. Positions A107–H184 form a DNA-binding region, homeobox; TALE-type. The highly conserved between B alleles stretch occupies residues R111 to V410. Disordered stretches follow at residues R202–D224, T278–L335, and K373–D393. A compositionally biased stretch (polar residues) spans L205–E219. A Nuclear localization signal motif is present at residues K276–R308. The segment covering Q294–S307 has biased composition (basic residues). The segment covering P312–L335 has biased composition (polar residues). The not essential for B6 function stretch occupies residues P333–V410. The span at R375–G388 shows a compositional bias: basic residues.

Belongs to the TALE/M-ATYP homeobox family.

The protein resides in the nucleus. The B locus has at least 25 alleles, and any combination of two different B alleles yields a multimeric regulatory protein, that activates genes responsible for the pathogenicity and for the sexual development of the fungus within the corn plant. The sequence is that of Mating-type locus allele B6 protein from Mycosarcoma maydis (Corn smut fungus).